The sequence spans 86 residues: MANSKSAKKRAIQAEKRRQHNASRRSMMRTYMKKTIAAIEAGNKEAATAALVEVTPLLDRMATKGLIHKNKAARHKSRFAAAIKAL.

The interval 1–27 is disordered; sequence MANSKSAKKRAIQAEKRRQHNASRRSM.

This sequence belongs to the bacterial ribosomal protein bS20 family.

Binds directly to 16S ribosomal RNA. This Vibrio atlanticus (strain LGP32) (Vibrio splendidus (strain Mel32)) protein is Small ribosomal subunit protein bS20.